A 218-amino-acid polypeptide reads, in one-letter code: uncharacterized protein (218 aa).

Disordered stretches follow at residues F30–P71, S93–D120, and M133–P209. Residues P43 to P71 are compositionally biased toward low complexity. The segment covering G94–G110 has biased composition (gly residues). The span at P138–C148 shows a compositional bias: pro residues. Residues P156 to G171 are compositionally biased toward gly residues. A compositionally biased stretch (low complexity) spans R191–P209.

This is an uncharacterized protein from Homo sapiens (Human).